The following is a 312-amino-acid chain: DNA-directed RNA polymerase subunit alpha (312 aa).

Positions 1–226 (MIEFEKPNIT…EHLDIFVNLT (226 aa)) are alpha N-terminal domain (alpha-NTD). The segment at 243 to 312 (KEKMLEMTIE…DLGLGLRKED (70 aa)) is alpha C-terminal domain (alpha-CTD).

This sequence belongs to the RNA polymerase alpha chain family. As to quaternary structure, homodimer. The RNAP catalytic core consists of 2 alpha, 1 beta, 1 beta' and 1 omega subunit. When a sigma factor is associated with the core the holoenzyme is formed, which can initiate transcription.

The catalysed reaction is RNA(n) + a ribonucleoside 5'-triphosphate = RNA(n+1) + diphosphate. DNA-dependent RNA polymerase catalyzes the transcription of DNA into RNA using the four ribonucleoside triphosphates as substrates. This is DNA-directed RNA polymerase subunit alpha from Lacticaseibacillus casei (strain BL23) (Lactobacillus casei).